The sequence spans 22 residues: MNLLVKCAGKIPALALTWTCRP.

The protein is Protein YncP of Escherichia coli (strain K12).